A 259-amino-acid chain; its full sequence is ATP synthase subunit a (259 aa).

Positions 1 to 10 are cleaved as a propeptide — removed in mature form; that stretch reads MFNLLNTYIT. 6 helical membrane passes run 36 to 56, 92 to 112, 125 to 145, 150 to 170, 191 to 211, and 216 to 236; these read LTTFSLYTIIVLLVITSLYTL, WGLYFPMIFTLFMFIFIANLI, LVFIISLSIVIWLGNTILGLY, VFFSLFVPAGTPLPLVPLLVI, ILAGHLLMVILAGLTFNFMLI, and LVFGFVPLAMILAIMMLEFAI.

It belongs to the ATPase A chain family. As to quaternary structure, F-type ATPases have 2 components, CF(1) - the catalytic core - and CF(0) - the membrane proton channel. In yeast, the dimeric form of ATP synthase consists of 17 polypeptides: alpha, beta, gamma, delta, epsilon, 4 (B), 5 (OSCP), 6 (A), 8, 9 (C), d, E (Tim11), f, g, h, i/j and k.

Its subcellular location is the mitochondrion inner membrane. In terms of biological role, mitochondrial membrane ATP synthase (F(1)F(0) ATP synthase or Complex V) produces ATP from ADP in the presence of a proton gradient across the membrane which is generated by electron transport complexes of the respiratory chain. F-type ATPases consist of two structural domains, F(1) - containing the extramembraneous catalytic core and F(0) - containing the membrane proton channel, linked together by a central stalk and a peripheral stalk. During catalysis, ATP synthesis in the catalytic domain of F(1) is coupled via a rotary mechanism of the central stalk subunits to proton translocation. Key component of the proton channel; it may play a direct role in the translocation of protons across the membrane. The polypeptide is ATP synthase subunit a (ATP6) (Saccharomyces cerevisiae (strain ATCC 204508 / S288c) (Baker's yeast)).